The sequence spans 264 residues: Rhamnosyltransferase WbbL (264 aa).

Belongs to the glycosyltransferase 2 family.

The protein operates within bacterial outer membrane biogenesis; lipopolysaccharide biosynthesis. In terms of biological role, rhamnosyltransferase involved in lipopolysaccharide biosynthesis. This chain is Rhamnosyltransferase WbbL (wbbL), found in Escherichia coli (strain K12).